The chain runs to 179 residues: Large ribosomal subunit protein uL6 (179 aa).

It belongs to the universal ribosomal protein uL6 family. Part of the 50S ribosomal subunit.

In terms of biological role, this protein binds to the 23S rRNA, and is important in its secondary structure. It is located near the subunit interface in the base of the L7/L12 stalk, and near the tRNA binding site of the peptidyltransferase center. In Bifidobacterium adolescentis (strain ATCC 15703 / DSM 20083 / NCTC 11814 / E194a), this protein is Large ribosomal subunit protein uL6.